A 253-amino-acid polypeptide reads, in one-letter code: Large ribosomal subunit protein uL4 (253 aa).

A disordered region spans residues 78–107 (SRAARVPHAKGGRRAHPPKPEADRSEKVNT). Positions 82–94 (RVPHAKGGRRAHP) are enriched in basic residues. A compositionally biased stretch (basic and acidic residues) spans 95-107 (PKPEADRSEKVNT).

The protein belongs to the universal ribosomal protein uL4 family. In terms of assembly, part of the 50S ribosomal subunit.

Functionally, one of the primary rRNA binding proteins, this protein initially binds near the 5'-end of the 23S rRNA. It is important during the early stages of 50S assembly. It makes multiple contacts with different domains of the 23S rRNA in the assembled 50S subunit and ribosome. Its function is as follows. Forms part of the polypeptide exit tunnel. This Methanosarcina acetivorans (strain ATCC 35395 / DSM 2834 / JCM 12185 / C2A) protein is Large ribosomal subunit protein uL4.